Reading from the N-terminus, the 204-residue chain is Large ribosomal subunit protein uL4 (204 aa).

Residues 53 to 73 form a disordered region; that stretch reads AFVSGGGKKPWRQKGRGGARA.

Belongs to the universal ribosomal protein uL4 family. As to quaternary structure, part of the 50S ribosomal subunit.

Its function is as follows. One of the primary rRNA binding proteins, this protein initially binds near the 5'-end of the 23S rRNA. It is important during the early stages of 50S assembly. It makes multiple contacts with different domains of the 23S rRNA in the assembled 50S subunit and ribosome. In terms of biological role, forms part of the polypeptide exit tunnel. The polypeptide is Large ribosomal subunit protein uL4 (Campylobacter concisus (strain 13826)).